The chain runs to 187 residues: uncharacterized protein (187 aa).

Residues 6-66 form the HTH tetR-type domain; the sequence is TDLAEQIFSA…QFAHRVFSMF (61 aa). The segment at residues 29 to 48 is a DNA-binding region (H-T-H motif); that stretch reads SMLKLAKEANVAAGTIYLYF.

This is an uncharacterized protein from Haemophilus influenzae (strain ATCC 51907 / DSM 11121 / KW20 / Rd).